Here is a 369-residue protein sequence, read N- to C-terminus: Chaperone protein DnaJ (369 aa).

A J domain is found at 7–73 (DYYEILGVPR…QKRAMYDRFG (67 aa)). The CR-type zinc finger occupies 143 to 225 (GAEIPVEYER…CGGSGRVLRK (83 aa)). Zn(2+) contacts are provided by C156, C159, C173, C176, C199, C202, C213, and C216. 4 CXXCXGXG motif repeats span residues 156 to 163 (CPRCGGTG), 173 to 180 (CPSCGGTG), 199 to 206 (CERCGGTG), and 213 to 220 (CHECGGSG).

Belongs to the DnaJ family. In terms of assembly, homodimer. It depends on Zn(2+) as a cofactor.

The protein localises to the cytoplasm. Participates actively in the response to hyperosmotic and heat shock by preventing the aggregation of stress-denatured proteins and by disaggregating proteins, also in an autonomous, DnaK-independent fashion. Unfolded proteins bind initially to DnaJ; upon interaction with the DnaJ-bound protein, DnaK hydrolyzes its bound ATP, resulting in the formation of a stable complex. GrpE releases ADP from DnaK; ATP binding to DnaK triggers the release of the substrate protein, thus completing the reaction cycle. Several rounds of ATP-dependent interactions between DnaJ, DnaK and GrpE are required for fully efficient folding. Also involved, together with DnaK and GrpE, in the DNA replication of plasmids through activation of initiation proteins. This Thermotoga petrophila (strain ATCC BAA-488 / DSM 13995 / JCM 10881 / RKU-1) protein is Chaperone protein DnaJ.